The primary structure comprises 1468 residues: MKTEFLSINDIFFLVKIGFKYVLALFNGFYLIKIVSYPNEHSIITNKMIYIGIGILLKIILIIIYWIYFMDIYILKKNCNKKFFGNIYCNSNKIIDNNISTTIIESDDFEYKKLIKKFFLKKMYYSLKKGHKIVKLYMLKIYNSDFNCYFCNTRDILYAIIWYISLYYWRRDEYNILWSFNKIPIYIYNILLILLSSSYIDLVMIIISYNKSKYHMMKSKLLIDVFFSSPSAFFFSRHFFVLENGIDIYFLMGFLRIIKVFLNVSYAKTEQSYILTNTEIKVIRIILGVLLLCNAFASTLYTIQGIHPYNIDNHDLYYILNNYLDYFYFSIISISTVGYGDIIPTNKLSRVICIFFIFWTFIWVPIQFNDLIISIFCKKETYGKLSMNNQKLILLIGDIQPEQLNTFFFESVAYGNKLKFHILTTYPINLYEEQIKIADNYCISIYIKNFDLNEKHNTNLLYSVNAQNAYYMFLFSNKFNNGHYNIDTKSFTRLLILAKFLHGEKKNAVIELRNKCVSNIVKSIGCEHFAIVNLKHSLIVKNLVCPGFITFLSNLFTAYNYNENPYYFNNSKYLHSFNFIAEFNKGSIAKIFSFAAHDNMIGLNFDKLFYKLYESLGILLIGIESSHINNNHFVYSNKKRLNFFFENVGRSMIKGNGIRDRTRKTGKIGGHKKFKFKLVYLCFLKRYIHSLSRDNCDNTQMITILNCKKNNSKMNKLNKKFYLKEIPNLLEMLNNHVHLTNKSNLSTPTWNNGIKESYKEKNIKSYHYIIDTNNINVAYKNNIPEKGKKDRGGIYIGNKHTNDTCARTNESHKNNRLRSRRSQNGKPYLGILKNCNNELFHTKKMNNYYESYRNNSNINEISIPNKRNGKPKCYLNLLGKNYFMKENDKCIVLANSKKVINYLSKAKSLFWLFEINSTKMDKVTYDLKSIIKTKQYFNKIPTSNLVKNIPIMPHMKNKSIISKHDSKIIPMDYYDLFNAYKSFRVFPQINYGITKNMLRVSYKENFNNDINNNRSIGDRSNSNSFSKLGMDKSTLSLTKFSNENSHMDSNSNDNYTVNYEHSDQAFFKGCVNWGGCNNGNTNIRENAQNEVYSINDVMNSVIKMEADKYTFEVNLNDTILVENDYNVLQKNNIKNFASIKKSNKNSNNNNKCEQIKQLNNNLTFKKNEKKTKSNKQNTNDTLERRKNGVAYSYLDACQKYFAHSAKNKKLLLLINYASNIIQLVKLINKTCKYNIIILTSEISSINIHHIYNVAFIKCKTMDDYSLLNAGLLQAEYILILPTEVNDINEINEIDMNNIILTRKITYLLKKKKKNYFINNIITELINPTNIIFLEENNMIKMTEKKSSYSDFFPYINSTQFYSSNIISETMLYNFMAHHKSFTKFPVSNSTLKCLIKDINIIYVCELRKYSDFSFKKIKTFRDLFFFLSKKCIIAIALYRKGDKYVPFYIYTKPCENCLIRFDDIVYVL.

6 consecutive transmembrane segments (helical) span residues 48–68 (MIYIGIGILLKIILIIIYWIY), 146–165 (FNCYFCNTRDILYAIIWYIS), 185–209 (IYIYNILLILLSSSYIDLVMIIISY), 221–240 (LLIDVFFSSPSAFFFSRHFF), 246–264 (IDIYFLMGFLRIIKVFLNV), and 285–306 (IILGVLLLCNAFASTLYTIQGI). An intramembrane region (pore-forming) is located at residues 326-344 (YFYFSIISISTVGYGDIIP). Residues 351–368 (VICIFFIFWTFIWVPIQF) traverse the membrane as a helical segment. The tract at residues 804–823 (TCARTNESHKNNRLRSRRSQ) is disordered. The span at 814–823 (NNRLRSRRSQ) shows a compositional bias: basic residues. Residues 1141 to 1185 (KSNKNSNNNNKCEQIKQLNNNLTFKKNEKKTKSNKQNTNDTLERR) are a coiled coil.

It localises to the membrane. Functionally, may be involved in transmembrane potassium transport at the subcellular level not affecting bulk potassium transport across the plasma membrane. This is Potassium channel K2 from Plasmodium berghei (strain Anka).